A 254-amino-acid chain; its full sequence is Mediator of RNA polymerase II transcription subunit 4 (254 aa).

Positions 72–114 (RVHQEMQSLEKEVEKRDSDIQQLQKQLKEAEHILATAVYQAKE) form a coiled coil. The disordered stretch occupies residues 215–254 (ILPPHHGNDFGLEPPGHNKENEDDVEAMSTDSSSSSSDSD). Residues 243-254 (STDSSSSSSDSD) show a composition bias toward low complexity.

Belongs to the Mediator complex subunit 4 family. As to quaternary structure, component of the Mediator complex.

It localises to the nucleus. Functionally, component of the Mediator complex, a coactivator involved in the regulated transcription of nearly all RNA polymerase II-dependent genes. Mediator functions as a bridge to convey information from gene-specific regulatory proteins to the basal RNA polymerase II transcription machinery. Mediator is recruited to promoters by direct interactions with regulatory proteins and serves as a scaffold for the assembly of a functional preinitiation complex with RNA polymerase II and the general transcription factors. This chain is Mediator of RNA polymerase II transcription subunit 4 (med4), found in Danio rerio (Zebrafish).